A 272-amino-acid chain; its full sequence is Type III pantothenate kinase (272 aa).

Position 6–13 (Asp6–Val13) interacts with ATP. Position 109–112 (Gly109–Arg112) interacts with substrate. Asp111 serves as the catalytic Proton acceptor. Asp131 serves as a coordination point for K(+). Ser134 contacts ATP. Thr186 is a substrate binding site.

This sequence belongs to the type III pantothenate kinase family. As to quaternary structure, homodimer. Requires NH4(+) as cofactor. It depends on K(+) as a cofactor.

Its subcellular location is the cytoplasm. The enzyme catalyses (R)-pantothenate + ATP = (R)-4'-phosphopantothenate + ADP + H(+). It participates in cofactor biosynthesis; coenzyme A biosynthesis; CoA from (R)-pantothenate: step 1/5. Its function is as follows. Catalyzes the phosphorylation of pantothenate (Pan), the first step in CoA biosynthesis. The chain is Type III pantothenate kinase from Mycobacterium ulcerans (strain Agy99).